A 369-amino-acid polypeptide reads, in one-letter code: MRDNTQHYRELFLEDTPLMDVRAPVEYHKGAFPHTVNRPLMNDIERQKVGTSYKQHGQQAAIALGHELVCGAVKAERLAAWKAFAEANPNGYLYCFRGGLRSQIVQQWLKQDAGIDYPRVIGGYKALRNFLFETTRAAVDECDFVLVGGLTGCGKTEVIAALDNSLDLEGHANHRGSSFGRRATPQPAQIDFENRLAIDILKKRHRGVGQFVLEDEGRIVGSCSLPLELYQGMQGYPLVWLEDGFEQRVARILKDYVIDLRSEFERVVGAEEGFAVFSAYLQKSLAGIVKRLGGERYQRLAAILVQALEEQGRDGSVETHRGWIEGLLKEYYDPMYAFQRQSKEDRVEFRGNQAEVIAYLRQRQALRPS.

One can recognise a Rhodanese domain in the interval 12–136 (FLEDTPLMDV…LRNFLFETTR (125 aa)). Catalysis depends on C95, which acts as the S-selanylcysteine intermediate.

The protein belongs to the SelU family. Monomer.

It catalyses the reaction 5-methylaminomethyl-2-thiouridine(34) in tRNA + selenophosphate + (2E)-geranyl diphosphate + H2O + H(+) = 5-methylaminomethyl-2-selenouridine(34) in tRNA + (2E)-thiogeraniol + phosphate + diphosphate. It carries out the reaction 5-methylaminomethyl-2-thiouridine(34) in tRNA + (2E)-geranyl diphosphate = 5-methylaminomethyl-S-(2E)-geranyl-thiouridine(34) in tRNA + diphosphate. The enzyme catalyses 5-methylaminomethyl-S-(2E)-geranyl-thiouridine(34) in tRNA + selenophosphate + H(+) = 5-methylaminomethyl-2-(Se-phospho)selenouridine(34) in tRNA + (2E)-thiogeraniol. The catalysed reaction is 5-methylaminomethyl-2-(Se-phospho)selenouridine(34) in tRNA + H2O = 5-methylaminomethyl-2-selenouridine(34) in tRNA + phosphate. In terms of biological role, involved in the post-transcriptional modification of the uridine at the wobble position (U34) of tRNA(Lys), tRNA(Glu) and tRNA(Gln). Catalyzes the conversion of 2-thiouridine (S2U-RNA) to 2-selenouridine (Se2U-RNA). Acts in a two-step process involving geranylation of 2-thiouridine (S2U) to S-geranyl-2-thiouridine (geS2U) and subsequent selenation of the latter derivative to 2-selenouridine (Se2U) in the tRNA chain. This is tRNA 2-selenouridine synthase from Pseudomonas paraeruginosa (strain DSM 24068 / PA7) (Pseudomonas aeruginosa (strain PA7)).